We begin with the raw amino-acid sequence, 418 residues long: UDP-N-acetylglucosamine 1-carboxyvinyltransferase (418 aa).

22–23 serves as a coordination point for phosphoenolpyruvate; that stretch reads KN. Residue R93 participates in UDP-N-acetyl-alpha-D-glucosamine binding. C117 functions as the Proton donor in the catalytic mechanism. C117 carries the post-translational modification 2-(S-cysteinyl)pyruvic acid O-phosphothioketal. UDP-N-acetyl-alpha-D-glucosamine contacts are provided by D305 and V327.

This sequence belongs to the EPSP synthase family. MurA subfamily.

It localises to the cytoplasm. The enzyme catalyses phosphoenolpyruvate + UDP-N-acetyl-alpha-D-glucosamine = UDP-N-acetyl-3-O-(1-carboxyvinyl)-alpha-D-glucosamine + phosphate. The protein operates within cell wall biogenesis; peptidoglycan biosynthesis. Functionally, cell wall formation. Adds enolpyruvyl to UDP-N-acetylglucosamine. The chain is UDP-N-acetylglucosamine 1-carboxyvinyltransferase from Halorhodospira halophila (strain DSM 244 / SL1) (Ectothiorhodospira halophila (strain DSM 244 / SL1)).